Reading from the N-terminus, the 107-residue chain is METIDKIKQQINENPILLYMKGSPKFPSCGFSARAVEAIIQCQVPFGYVDILTNPDIRSELPKFANWPTFPQLWVEGELIGGCDIILEMFQKGELHTLLKETATKHG.

One can recognise a Glutaredoxin domain in the interval 4–106; it reads IDKIKQQINE…TLLKETATKH (103 aa). Residue lysine 21 participates in glutathione binding. Position 29 (cysteine 29) interacts with [2Fe-2S] cluster. Glutathione-binding positions include arginine 58, phenylalanine 70, and 83-84; that span reads CD.

This sequence belongs to the glutaredoxin family. Monothiol subfamily. As to quaternary structure, homodimer.

The protein localises to the cytoplasm. Its function is as follows. Monothiol glutaredoxin involved in the biogenesis of iron-sulfur clusters. The chain is Glutaredoxin 4 (grxD) from Haemophilus ducreyi (strain 35000HP / ATCC 700724).